We begin with the raw amino-acid sequence, 152 residues long: SsrA-binding protein (152 aa).

Residues 132-142 are compositionally biased toward basic and acidic residues; it reads REAIKKRDVSD. The interval 132-152 is disordered; it reads REAIKKRDVSDQIRSSLRRSR.

It belongs to the SmpB family.

The protein resides in the cytoplasm. Its function is as follows. Required for rescue of stalled ribosomes mediated by trans-translation. Binds to transfer-messenger RNA (tmRNA), required for stable association of tmRNA with ribosomes. tmRNA and SmpB together mimic tRNA shape, replacing the anticodon stem-loop with SmpB. tmRNA is encoded by the ssrA gene; the 2 termini fold to resemble tRNA(Ala) and it encodes a 'tag peptide', a short internal open reading frame. During trans-translation Ala-aminoacylated tmRNA acts like a tRNA, entering the A-site of stalled ribosomes, displacing the stalled mRNA. The ribosome then switches to translate the ORF on the tmRNA; the nascent peptide is terminated with the 'tag peptide' encoded by the tmRNA and targeted for degradation. The ribosome is freed to recommence translation, which seems to be the essential function of trans-translation. In Bdellovibrio bacteriovorus (strain ATCC 15356 / DSM 50701 / NCIMB 9529 / HD100), this protein is SsrA-binding protein.